Reading from the N-terminus, the 354-residue chain is Holliday junction branch migration complex subunit RuvB (354 aa).

The segment at 1–24 (MSIQTDDFAPVPPPKRVVSAAPTS) is disordered. The interval 5–195 (TDDFAPVPPP…FGIVARLEFY (191 aa)) is large ATPase domain (RuvB-L). ATP-binding positions include Leu-34, Arg-35, Gly-76, Lys-79, Thr-80, Thr-81, 142-144 (EDY), Arg-185, Tyr-195, and Arg-232. Thr-80 is a binding site for Mg(2+). A small ATPAse domain (RuvB-S) region spans residues 196-266 (TPEELSRIVT…IAQRALAMLD (71 aa)). Positions 269-354 (PQGFDVMDRK…RQHTDLFGPA (86 aa)) are head domain (RuvB-H). Arg-324 and Arg-329 together coordinate DNA.

The protein belongs to the RuvB family. Homohexamer. Forms an RuvA(8)-RuvB(12)-Holliday junction (HJ) complex. HJ DNA is sandwiched between 2 RuvA tetramers; dsDNA enters through RuvA and exits via RuvB. An RuvB hexamer assembles on each DNA strand where it exits the tetramer. Each RuvB hexamer is contacted by two RuvA subunits (via domain III) on 2 adjacent RuvB subunits; this complex drives branch migration. In the full resolvosome a probable DNA-RuvA(4)-RuvB(12)-RuvC(2) complex forms which resolves the HJ.

Its subcellular location is the cytoplasm. It catalyses the reaction ATP + H2O = ADP + phosphate + H(+). Its function is as follows. The RuvA-RuvB-RuvC complex processes Holliday junction (HJ) DNA during genetic recombination and DNA repair, while the RuvA-RuvB complex plays an important role in the rescue of blocked DNA replication forks via replication fork reversal (RFR). RuvA specifically binds to HJ cruciform DNA, conferring on it an open structure. The RuvB hexamer acts as an ATP-dependent pump, pulling dsDNA into and through the RuvAB complex. RuvB forms 2 homohexamers on either side of HJ DNA bound by 1 or 2 RuvA tetramers; 4 subunits per hexamer contact DNA at a time. Coordinated motions by a converter formed by DNA-disengaged RuvB subunits stimulates ATP hydrolysis and nucleotide exchange. Immobilization of the converter enables RuvB to convert the ATP-contained energy into a lever motion, pulling 2 nucleotides of DNA out of the RuvA tetramer per ATP hydrolyzed, thus driving DNA branch migration. The RuvB motors rotate together with the DNA substrate, which together with the progressing nucleotide cycle form the mechanistic basis for DNA recombination by continuous HJ branch migration. Branch migration allows RuvC to scan DNA until it finds its consensus sequence, where it cleaves and resolves cruciform DNA. The sequence is that of Holliday junction branch migration complex subunit RuvB from Paracidovorax citrulli (strain AAC00-1) (Acidovorax citrulli).